The primary structure comprises 442 residues: Histidine--tRNA ligase (442 aa).

This sequence belongs to the class-II aminoacyl-tRNA synthetase family. Homodimer.

Its subcellular location is the cytoplasm. The enzyme catalyses tRNA(His) + L-histidine + ATP = L-histidyl-tRNA(His) + AMP + diphosphate + H(+). The chain is Histidine--tRNA ligase from Helicobacter hepaticus (strain ATCC 51449 / 3B1).